A 410-amino-acid chain; its full sequence is Acetyltransferase aurG (410 aa).

3 helical membrane-spanning segments follow: residues 3-23, 28-48, and 59-79; these read LWLV…VVCF, SLVR…GLIL, and WSLV…VGLI. Residues 90–99 are compositionally biased toward polar residues; sequence TSSRGGQPNA. The segment at 90–112 is disordered; the sequence is TSSRGGQPNASLDLAGRKKPPSS. An N-linked (GlcNAc...) asparagine glycan is attached at Asn-98. 4 helical membrane-spanning segments follow: residues 157 to 177, 219 to 239, 300 to 320, and 364 to 384; these read AMTL…GGDL, MYFS…MVGL, ILAT…YSYG, and IGYV…FFPL.

It belongs to the wax synthase family.

The protein localises to the membrane. The protein operates within polyketide biosynthesis. In terms of biological role, acetyltransferase; part of the gene cluster that mediates the biosynthesis of aurovertins, fungal polyketides that exhibit potent inhibition of adenosine triphosphate synthase. Tha biosynthesis starts with the HR-PKS aurA that selects propionate as the starter unit; synthesizes a hexa-ene chain through the repeated functions of the KR and DH domains in the first six iterations; selectively introduces three alpha-methyl substitutions at C4, C6, and C16 using the S-adensylmethionine-dependent cMET; and shuts off KR and DH in the last three iterations to afford a 1,3,5-triketo portion that can undergo intramolecular cyclization to yield the alpha-pyrone intermediate. AurE may act as a cyclase and enhances the rate of pyrone formation and product release of aurA. The methyltransferase aurB then methylates the C17 hydroxyl group. C17 methylation is required to initiate epoxidation by the downstream monooxygenase aurC. The monooxygenase aurC and the epoxide hydrolase aurD can iteratively transform the terminal triene portion of the methylated precursor into the dioxabicyclo[3.2.1]octane scaffold of aurovertin E. Epoxidation modifications of the precursor occur in two separate steps; bis-epoxidation of the two terminal olefins takes place first, followed by another epoxidation that occurs at C7-C8 after tetrahydrofuran formation. The O-acyltransferase aurG converts aurovertin E to aurovertin A. In Calcarisporium arbuscula (Dendryphion arbuscula), this protein is Acetyltransferase aurG.